The following is a 239-amino-acid chain: ATP synthase subunit b (239 aa).

Positions M1–P22 are enriched in low complexity. The interval M1–E64 is disordered. Basic and acidic residues-rich tracts occupy residues K23–Q33 and E45–E64. A helical transmembrane segment spans residues S85 to M105.

It belongs to the ATPase B chain family. As to quaternary structure, F-type ATPases have 2 components, F(1) - the catalytic core - and F(0) - the membrane proton channel. F(1) has five subunits: alpha(3), beta(3), gamma(1), delta(1), epsilon(1). F(0) has three main subunits: a(1), b(2) and c(10-14). The alpha and beta chains form an alternating ring which encloses part of the gamma chain. F(1) is attached to F(0) by a central stalk formed by the gamma and epsilon chains, while a peripheral stalk is formed by the delta and b chains.

Its subcellular location is the cell inner membrane. F(1)F(0) ATP synthase produces ATP from ADP in the presence of a proton or sodium gradient. F-type ATPases consist of two structural domains, F(1) containing the extramembraneous catalytic core and F(0) containing the membrane proton channel, linked together by a central stalk and a peripheral stalk. During catalysis, ATP synthesis in the catalytic domain of F(1) is coupled via a rotary mechanism of the central stalk subunits to proton translocation. In terms of biological role, component of the F(0) channel, it forms part of the peripheral stalk, linking F(1) to F(0). The sequence is that of ATP synthase subunit b from Koribacter versatilis (strain Ellin345).